Consider the following 590-residue polypeptide: Probable metalloendopeptidase G1-type (590 aa).

His41 is a binding site for Zn(2+). Glu44 is an active-site residue. His45 provides a ligand contact to Zn(2+).

This sequence belongs to the peptidase M44 family. Zn(2+) serves as cofactor.

Seems to be involved in viral proteins maturation by cleavage at Ala-Gly-|-Xaa motifs. This Homo sapiens (Human) protein is Probable metalloendopeptidase G1-type.